We begin with the raw amino-acid sequence, 245 residues long: 1-(5-phosphoribosyl)-5-[(5-phosphoribosylamino)methylideneamino] imidazole-4-carboxamide isomerase (245 aa).

D7 acts as the Proton acceptor in catalysis. D129 (proton donor) is an active-site residue.

The protein belongs to the HisA/HisF family.

The protein localises to the cytoplasm. It catalyses the reaction 1-(5-phospho-beta-D-ribosyl)-5-[(5-phospho-beta-D-ribosylamino)methylideneamino]imidazole-4-carboxamide = 5-[(5-phospho-1-deoxy-D-ribulos-1-ylimino)methylamino]-1-(5-phospho-beta-D-ribosyl)imidazole-4-carboxamide. Its pathway is amino-acid biosynthesis; L-histidine biosynthesis; L-histidine from 5-phospho-alpha-D-ribose 1-diphosphate: step 4/9. This chain is 1-(5-phosphoribosyl)-5-[(5-phosphoribosylamino)methylideneamino] imidazole-4-carboxamide isomerase, found in Shewanella piezotolerans (strain WP3 / JCM 13877).